The sequence spans 477 residues: Aspartyl/glutamyl-tRNA(Asn/Gln) amidotransferase subunit B (477 aa).

This sequence belongs to the GatB/GatE family. GatB subfamily. In terms of assembly, heterotrimer of A, B and C subunits.

The catalysed reaction is L-glutamyl-tRNA(Gln) + L-glutamine + ATP + H2O = L-glutaminyl-tRNA(Gln) + L-glutamate + ADP + phosphate + H(+). The enzyme catalyses L-aspartyl-tRNA(Asn) + L-glutamine + ATP + H2O = L-asparaginyl-tRNA(Asn) + L-glutamate + ADP + phosphate + 2 H(+). Allows the formation of correctly charged Asn-tRNA(Asn) or Gln-tRNA(Gln) through the transamidation of misacylated Asp-tRNA(Asn) or Glu-tRNA(Gln) in organisms which lack either or both of asparaginyl-tRNA or glutaminyl-tRNA synthetases. The reaction takes place in the presence of glutamine and ATP through an activated phospho-Asp-tRNA(Asn) or phospho-Glu-tRNA(Gln). In Lawsonia intracellularis (strain PHE/MN1-00), this protein is Aspartyl/glutamyl-tRNA(Asn/Gln) amidotransferase subunit B.